The primary structure comprises 447 residues: Tubulin beta chain (447 aa).

8 residues coordinate GTP: Gln-11, Glu-69, Ser-138, Gly-142, Thr-143, Gly-144, Asn-204, and Asn-226. Residue Glu-69 participates in Mg(2+) binding. The segment at Gln-424 to Glu-447 is disordered. Residues Glu-432–Glu-447 are compositionally biased toward acidic residues.

This sequence belongs to the tubulin family. Dimer of alpha and beta chains. A typical microtubule is a hollow water-filled tube with an outer diameter of 25 nm and an inner diameter of 15 nM. Alpha-beta heterodimers associate head-to-tail to form protofilaments running lengthwise along the microtubule wall with the beta-tubulin subunit facing the microtubule plus end conferring a structural polarity. Microtubules usually have 13 protofilaments but different protofilament numbers can be found in some organisms and specialized cells. Requires Mg(2+) as cofactor.

It is found in the cytoplasm. It localises to the cytoskeleton. Tubulin is the major constituent of microtubules, a cylinder consisting of laterally associated linear protofilaments composed of alpha- and beta-tubulin heterodimers. Microtubules grow by the addition of GTP-tubulin dimers to the microtubule end, where a stabilizing cap forms. Below the cap, tubulin dimers are in GDP-bound state, owing to GTPase activity of alpha-tubulin. This is Tubulin beta chain (TUB1) from Cercospora beticola (Sugarbeet leaf spot fungus).